Reading from the N-terminus, the 365-residue chain is Bifunctional chorismate mutase/prephenate dehydratase (365 aa).

Residues 1–96 enclose the Chorismate mutase domain; it reads MSEADQLKAL…SCLALEQPLR (96 aa). Positions 11, 28, 39, and 57 each coordinate substrate. The 176-residue stretch at 97–272 folds into the Prephenate dehydratase domain; the sequence is VAYLGPEGTF…NSTRFLIIGS (176 aa). An ACT domain is found at 284–361; sequence SIIVSMRNKP…VALKVLGSYP (78 aa).

Its subcellular location is the cytoplasm. The catalysed reaction is chorismate = prephenate. The enzyme catalyses prephenate + H(+) = 3-phenylpyruvate + CO2 + H2O. Its pathway is amino-acid biosynthesis; L-phenylalanine biosynthesis; phenylpyruvate from prephenate: step 1/1. It participates in metabolic intermediate biosynthesis; prephenate biosynthesis; prephenate from chorismate: step 1/1. Its function is as follows. Catalyzes the Claisen rearrangement of chorismate to prephenate and the decarboxylation/dehydration of prephenate to phenylpyruvate. This is Bifunctional chorismate mutase/prephenate dehydratase from Stutzerimonas stutzeri (Pseudomonas stutzeri).